The sequence spans 699 residues: tRNA(Met) cytidine acetyltransferase TmcA (699 aa).

Residues Gln-178, 200 to 209, and Arg-322 contribute to the ATP site; that span reads GRGKSTLAGM. The N-acetyltransferase domain occupies 408 to 547; it reads MHIASAQVAG…SGCYSAMAIL (140 aa). Residues 475–477 and 482–488 contribute to the acetyl-CoA site; these read IAV and RRQGIGR.

Belongs to the RNA cytidine acetyltransferase family. TmcA subfamily.

It is found in the cytoplasm. The catalysed reaction is cytidine(34) in elongator tRNA(Met) + acetyl-CoA + ATP + H2O = N(4)-acetylcytidine(34) in elongator tRNA(Met) + ADP + phosphate + CoA + H(+). Its function is as follows. Catalyzes the formation of N(4)-acetylcytidine (ac(4)C) at the wobble position of tRNA(Met), by using acetyl-CoA as an acetyl donor and ATP (or GTP). The chain is tRNA(Met) cytidine acetyltransferase TmcA from Pectobacterium atrosepticum (strain SCRI 1043 / ATCC BAA-672) (Erwinia carotovora subsp. atroseptica).